The primary structure comprises 272 residues: Putative pyruvate, phosphate dikinase regulatory protein (272 aa).

147–154 is an ADP binding site; it reads GLSRTSKT.

The protein belongs to the pyruvate, phosphate/water dikinase regulatory protein family. PDRP subfamily.

The enzyme catalyses N(tele)-phospho-L-histidyl/L-threonyl-[pyruvate, phosphate dikinase] + ADP = N(tele)-phospho-L-histidyl/O-phospho-L-threonyl-[pyruvate, phosphate dikinase] + AMP + H(+). It catalyses the reaction N(tele)-phospho-L-histidyl/O-phospho-L-threonyl-[pyruvate, phosphate dikinase] + phosphate + H(+) = N(tele)-phospho-L-histidyl/L-threonyl-[pyruvate, phosphate dikinase] + diphosphate. Bifunctional serine/threonine kinase and phosphorylase involved in the regulation of the pyruvate, phosphate dikinase (PPDK) by catalyzing its phosphorylation/dephosphorylation. The chain is Putative pyruvate, phosphate dikinase regulatory protein from Clostridium botulinum (strain Alaska E43 / Type E3).